A 289-amino-acid chain; its full sequence is Glyceraldehyde-3-phosphate dehydrogenase (289 aa).

NAD(+) is bound by residues Asp-12 and Arg-57. Residues 128-130, Thr-159, 188-189, and Arg-211 contribute to the D-glyceraldehyde 3-phosphate site; these read SCT and TG. Cys-129 (nucleophile) is an active-site residue.

It belongs to the glyceraldehyde-3-phosphate dehydrogenase family. As to quaternary structure, homotetramer.

It localises to the cytoplasm. It catalyses the reaction D-glyceraldehyde 3-phosphate + phosphate + NAD(+) = (2R)-3-phospho-glyceroyl phosphate + NADH + H(+). The protein operates within carbohydrate degradation; glycolysis; pyruvate from D-glyceraldehyde 3-phosphate: step 1/5. The protein is Glyceraldehyde-3-phosphate dehydrogenase (GPD) of Amanita muscaria (Fly agaric).